The following is a 473-amino-acid chain: Sulfhydrylase-like protein lolC1 (473 aa).

N6-(pyridoxal phosphate)lysine is present on Lys226.

This sequence belongs to the trans-sulfuration enzymes family. Pyridoxal 5'-phosphate serves as cofactor.

Its pathway is alkaloid biosynthesis. Sulfhydrylase-like protein; part of the gene cluster that mediates the biosynthesis of loline alkaloids, potent insecticidal agents composed of a pyrrolizidine ring system and an uncommon ether bridge linking carbons 2 and 7. Lolines are structurally differentiated by the various modifications of the L-amino group and include norloline, loline, N-methylloline, N-acetylloline, N-acetylnorloline, and N-formylloline. The first committed step is the condensation of O-acetyl-L-homoserine (derived from L-aspartic acid) and L-proline, probably catalyzed by the gamma-type pyridoxal 5'-phosphate(PLP)-dependent enzyme lolC, to give the diamino diacid, NACPP. Ensuing cyclization, decarboxylation, and acetylation steps yield 1-exo-acetamidopyrrolizidine (AcAP). LolO is required for installation of the ether bridge upon the pathway intermediate, 1-exo-acetamidopyrrolizidine (AcAP). In sequential 2-oxoglutarate- and O(2)-consuming steps, lolO removes hydrogens from C2 and C7 of AcAP to form both carbon-oxygen bonds in N-acetylnorloline (NANL), the precursor to all other lolines. The enzymes lolD, lolE, lolF and lolT have also been proposed to be involved in the ether-bridge installation. Further processing of the exocyclic moiety of NANL by fungal N-acetamidase (LolN), methyltransferase (LolM), and cytochrome P450 (LolP) enzymes, with occasional involvement of a plant acetyltransferase, generates the other known lolines. LolN transforms NANL to norlonine which is monomethylated and dimethylated to respectively lonine and N-methyllonine (NML) by lolM. LolP catalyzes hydroxylation of the methyl group in N-methylloline (NML) and further oxygenation to N-formylloline (NFL). A plant acetyltransferase is responsible for the acetylation of loline to form N-acetylloline (NAL). LolA might interact with aspartate kinase to prevent feedback inhibition of its activity by these end products and thereby promote production of L-homoserine from L-aspartate. The polypeptide is Sulfhydrylase-like protein lolC1 (Epichloe uncinata (Endophyte fungus)).